The following is a 375-amino-acid chain: 23S rRNA (uracil(747)-C(5))-methyltransferase RlmC (375 aa).

[4Fe-4S] cluster contacts are provided by cysteine 3, cysteine 11, cysteine 14, and cysteine 87. S-adenosyl-L-methionine-binding residues include glutamine 212, phenylalanine 241, glutamate 262, and asparagine 307. Cysteine 334 functions as the Nucleophile in the catalytic mechanism.

This sequence belongs to the class I-like SAM-binding methyltransferase superfamily. RNA M5U methyltransferase family. RlmC subfamily.

The enzyme catalyses uridine(747) in 23S rRNA + S-adenosyl-L-methionine = 5-methyluridine(747) in 23S rRNA + S-adenosyl-L-homocysteine + H(+). Functionally, catalyzes the formation of 5-methyl-uridine at position 747 (m5U747) in 23S rRNA. In Escherichia coli O139:H28 (strain E24377A / ETEC), this protein is 23S rRNA (uracil(747)-C(5))-methyltransferase RlmC.